The chain runs to 301 residues: Probable 5-dehydro-4-deoxyglucarate dehydratase (301 aa).

This sequence belongs to the DapA family.

It carries out the reaction 5-dehydro-4-deoxy-D-glucarate + H(+) = 2,5-dioxopentanoate + CO2 + H2O. It participates in carbohydrate acid metabolism; D-glucarate degradation; 2,5-dioxopentanoate from D-glucarate: step 2/2. In Chelativorans sp. (strain BNC1), this protein is Probable 5-dehydro-4-deoxyglucarate dehydratase.